A 491-amino-acid chain; its full sequence is Glucose-6-phosphate exchanger SLC37A2 (491 aa).

A helical transmembrane segment spans residues 5-25 (LAPGIWYRAFILLITFLIYTC). Asn-43, Asn-52, and Asn-58 each carry an N-linked (GlcNAc...) asparagine glycan. The next 5 helical transmembrane spans lie at 78–98 (GAVD…SGIF), 108–130 (LTAG…FWNI), 132–154 (VLWY…WPAV), 169–189 (LIMG…SLLA), and 200–220 (SFVV…FFLI). Residues 229-257 (SPPQHHGNPEESQDQPEDPANGPSCNKES) form a disordered region. Helical transmembrane passes span 292–312 (LCLL…PLYI), 328–348 (TLFD…SDYI), 352–372 (ATTC…YNHV), 377–397 (IGIS…PYAL), 424–444 (AIID…AGLI), and 452–472 (VFYM…RLVY).

The protein belongs to the major facilitator superfamily. Organophosphate:Pi antiporter (OPA) (TC 2.A.1.4) family.

The protein localises to the endoplasmic reticulum membrane. It catalyses the reaction D-glucose 6-phosphate(in) + phosphate(out) = D-glucose 6-phosphate(out) + phosphate(in). With respect to regulation, inhibited by vanadate but not by chlorogenic acid. Functionally, inorganic phosphate and glucose-6-phosphate antiporter. May transport cytoplasmic glucose-6-phosphate into the lumen of the endoplasmic reticulum and translocate inorganic phosphate into the opposite direction. Independent of a lumenal glucose-6-phosphatase. May not play a role in homeostatic regulation of blood glucose levels. This Bos taurus (Bovine) protein is Glucose-6-phosphate exchanger SLC37A2.